A 225-amino-acid polypeptide reads, in one-letter code: 7-cyano-7-deazaguanine synthase (225 aa).

8–18 (VSGGADSATVL) is an ATP binding site. Zn(2+) contacts are provided by Cys-188, Cys-198, Cys-201, and Cys-204.

Belongs to the QueC family. Requires Zn(2+) as cofactor.

The catalysed reaction is 7-carboxy-7-deazaguanine + NH4(+) + ATP = 7-cyano-7-deazaguanine + ADP + phosphate + H2O + H(+). It participates in purine metabolism; 7-cyano-7-deazaguanine biosynthesis. Catalyzes the ATP-dependent conversion of 7-carboxy-7-deazaguanine (CDG) to 7-cyano-7-deazaguanine (preQ(0)). This chain is 7-cyano-7-deazaguanine synthase, found in Rickettsia bellii (strain OSU 85-389).